The following is a 307-amino-acid chain: Nucleotide-binding protein Arth_2083 (307 aa).

30–37 (GMSGAGRS) contacts ATP. A GTP-binding site is contributed by 81-84 (DVRS).

Belongs to the RapZ-like family.

Functionally, displays ATPase and GTPase activities. In Arthrobacter sp. (strain FB24), this protein is Nucleotide-binding protein Arth_2083.